A 102-amino-acid chain; its full sequence is C-X-C motif chemokine 10 (102 aa).

A signal peptide spans 1–19; sequence MNKSGFLIFCLILLTLSQG. A Citrulline modification is found at Arg-24. Disulfide bonds link Cys-28/Cys-55 and Cys-30/Cys-72.

Belongs to the intercrine alpha (chemokine CxC) family. As to quaternary structure, monomer, dimer, and tetramer. Interacts with CXCR3 (via N-terminus).

The protein resides in the secreted. Pro-inflammatory cytokine that is involved in a wide variety of processes such as chemotaxis, differentiation, and activation of peripheral immune cells, regulation of cell growth, apoptosis and modulation of angiostatic effects. Plays thereby an important role during viral infections by stimulating the activation and migration of immune cells to the infected sites. Mechanistically, binding of CXCL10 to the CXCR3 receptor activates G protein-mediated signaling and results in downstream activation of phospholipase C-dependent pathway, an increase in intracellular calcium production and actin reorganization. In turn, recruitment of activated Th1 lymphocytes occurs at sites of inflammation. Activation of the CXCL10/CXCR3 axis also plays an important role in neurons in response to brain injury for activating microglia, the resident macrophage population of the central nervous system, and directing them to the lesion site. This recruitment is an essential element for neuronal reorganization. This chain is C-X-C motif chemokine 10 (CXCL10), found in Bos taurus (Bovine).